The following is a 576-amino-acid chain: Urease subunit alpha (576 aa).

The 445-residue stretch at 132–576 (GGIDTHIHFI…LPMAQRYFLF (445 aa)) folds into the Urease domain. The Ni(2+) site is built by His-137, His-139, and Lys-220. Lys-220 is modified (N6-carboxylysine). His-222 contacts substrate. Positions 249 and 275 each coordinate Ni(2+). His-323 (proton donor) is an active-site residue. Position 363 (Asp-363) interacts with Ni(2+).

This sequence belongs to the metallo-dependent hydrolases superfamily. Urease alpha subunit family. In terms of assembly, heterotrimer of UreA (gamma), UreB (beta) and UreC (alpha) subunits. Three heterotrimers associate to form the active enzyme. Requires Ni cation as cofactor. In terms of processing, carboxylation allows a single lysine to coordinate two nickel ions.

The protein localises to the cytoplasm. The catalysed reaction is urea + 2 H2O + H(+) = hydrogencarbonate + 2 NH4(+). It functions in the pathway nitrogen metabolism; urea degradation; CO(2) and NH(3) from urea (urease route): step 1/1. This chain is Urease subunit alpha, found in Paenarthrobacter aurescens (strain TC1).